We begin with the raw amino-acid sequence, 69 residues long: VLIIAVLFLTACQLTTAETYPRGQQRHHALRSTDKNSKLTRGCTPRNGACGYHSHCCSNFCHTWANVCL.

A signal peptide spans Val1–Ala17. The propeptide occupies Glu18 to Thr40. 3 disulfides stabilise this stretch: Cys43–Cys57, Cys50–Cys61, and Cys56–Cys68.

It belongs to the conotoxin O1 superfamily. As to expression, expressed by the venom duct.

The protein resides in the secreted. The protein is Conotoxin LvVID of Conus lividus (Livid cone).